Here is a 157-residue protein sequence, read N- to C-terminus: MSNKVIDTVSEMVQPILDNLQLELVDIEFVKEGQSWFLRVFIDSDDGVDIEECAKVSEALSEKLDEADPIKQNYFLEVSSPGAERPLKKEADFMKALGKNVYIKTYEPIEGNKEFEGELSAFDGENVEVTVMIKTRRKTINIPYDKVAKARLAVSFN.

Belongs to the RimP family.

It localises to the cytoplasm. Functionally, required for maturation of 30S ribosomal subunits. This is Ribosome maturation factor RimP from Bacillus licheniformis (strain ATCC 14580 / DSM 13 / JCM 2505 / CCUG 7422 / NBRC 12200 / NCIMB 9375 / NCTC 10341 / NRRL NRS-1264 / Gibson 46).